The primary structure comprises 829 residues: Conserved oligomeric Golgi complex subunit 5 (829 aa).

Ser166 carries the phosphoserine modification.

It belongs to the COG5 family. As to quaternary structure, component of the conserved oligomeric Golgi complex which is composed of eight different subunits and is required for normal Golgi morphology and localization.

Its subcellular location is the cytoplasm. It is found in the cytosol. The protein localises to the golgi apparatus membrane. In terms of biological role, required for normal Golgi function. The polypeptide is Conserved oligomeric Golgi complex subunit 5 (Cog5) (Mus musculus (Mouse)).